The primary structure comprises 1032 residues: uncharacterized protein (1032 aa).

3 disordered regions span residues 54-80 (NNNN…NNNN), 391-451 (QLQI…QTHL), and 884-934 (INNE…SKVK). Over residues 884–907 (INNENNNENNNNYNGNINSNNNNN) the composition is skewed to low complexity.

This is an uncharacterized protein from Dictyostelium discoideum (Social amoeba).